Consider the following 898-residue polypeptide: Vacuolar protein sorting-associated protein 41 homolog (898 aa).

Positions methionine 1–glutamate 10 are enriched in basic and acidic residues. Positions methionine 1–glutamate 35 are disordered. A CHCR repeat occupies leucine 614–glutamine 756. The segment at cysteine 835–serine 890 adopts an RING-type; atypical zinc-finger fold.

It belongs to the VPS41 family. In terms of assembly, probable component of the homotypic fusion and vacuole protein sorting (HOPS) complex consisting of the core class C Vps proteins vps-11, vps-16, vps-18, and which further associates with vps-33.1, vps-39 and vps-41.

Its subcellular location is the endosome membrane. It is found in the late endosome. The protein resides in the lysosome. The protein localises to the golgi apparatus. It localises to the trans-Golgi network. Its subcellular location is the early endosome. It is found in the cytoplasmic vesicle. The protein resides in the clathrin-coated vesicle. Functionally, plays a role in vesicle-mediated protein trafficking to lysosomal compartments including the endocytic membrane transport pathways. Believed to act in part as a core component of the putative HOPS endosomal tethering complex which is proposed to be involved in the rab-5-to-rab-7 endosome conversion probably implicating sand-1, and via binding SNAREs and SNARE complexes to mediate tethering and docking events during SNARE-mediated membrane fusion. The HOPS complex is proposed to be recruited to rab-7 on the late endosomal membrane and to regulate late endocytic, phagocytic and autophagic traffic towards lysosomes. Within the HOPS complex, contributes to the normal development of gut granules in the adult intestine. May mediate the tethering of autophagosomes with lysosomes. Has a role in the negative regulation of apoptosis. Required for uptake of exogenous dsRNA which is used in experimental RNA silencing. This Caenorhabditis briggsae protein is Vacuolar protein sorting-associated protein 41 homolog.